Consider the following 120-residue polypeptide: Large ribosomal subunit protein uL18 (120 aa).

The protein belongs to the universal ribosomal protein uL18 family. In terms of assembly, part of the 50S ribosomal subunit; part of the 5S rRNA/L5/L18/L25 subcomplex. Contacts the 5S and 23S rRNAs.

This is one of the proteins that bind and probably mediate the attachment of the 5S RNA into the large ribosomal subunit, where it forms part of the central protuberance. The protein is Large ribosomal subunit protein uL18 of Nitrobacter hamburgensis (strain DSM 10229 / NCIMB 13809 / X14).